The sequence spans 675 residues: MNNNSNNNNNNNIDQKNETTNEITNNTSNNNNIINNVNQNSTSITTSPILSPNNNINDNSMMDGKRLCASSKKVCSKRPMETYRFCIKHILEEPSAPFKQCEFISLKSQKQCTNPVSIKEKDPRFCVSHKHIIESTKKRVLESVVSSITSPSSSSPLPNASLIGSNSNITSPLQNLTTLNAFTGNNNNNTTTTTTTTTTNSTPSLNFDQQINIDIDNINGGDEPNLSLSASSFNFNIISNNDEEPKKKIMKILDRHGISQGRFYQDFKQNLKQLKQKHKQKQQLQNQKMFEQSQQQDQQQKPVQQPIQQQQQQDQLQIQEERQVSQQDEILEKQQQQQQQQQQQQQQQQQQQQQQQQQKKQQQELQIENNKENENINESNYFGEEFIEKDLEIELFKAMDDGHLSELCEDFDSDFYFASSSVLTDEELIQRRKIYISKLILLYKKQYNRFKERLRIIRRHYISTSLSLNQQNDSNKMEIDNNNDNNINNNNNNNNNNNNNNNNNNNNNNNNNNNNNNNNKLNKRKEEGNLCLSVNCKVKPMLLSKYCYSHILQDKDQKLFHECTYQLSANKKCGYPILKVQIPTLCREHLDIYETNNEIIKSLPKKQKQFIKQRIDIEKHNAPSTLVPVTQPINQNNQNNNNNNTNNSSKEESKDNNNNNNNKEILKDSDNTMIS.

5 disordered regions span residues Met-1 to Gln-39, Thr-183 to Pro-203, Leu-274 to Val-324, Asp-473 to Lys-523, and Val-627 to Ser-675. Low complexity-rich tracts occupy residues Gln-282–Ile-318, Asn-482–Asn-519, and Asn-634–Ser-648. Positions Glu-664–Ser-675 are enriched in basic and acidic residues.

Belongs to the INO80D family. As to quaternary structure, component of the chromatin-remodeling INO80 complex.

It is found in the nucleus. Functionally, putative regulatory component of the chromatin remodeling INO80 complex which is involved in transcriptional regulation, DNA replication and probably DNA repair. This chain is INO80 complex subunit D, found in Dictyostelium discoideum (Social amoeba).